The following is a 271-amino-acid chain: uncharacterized protein (271 aa).

Residues M1 to A22 form the signal peptide. C23 carries the N-palmitoyl cysteine lipid modification. C23 carries S-diacylglycerol cysteine lipidation.

This sequence belongs to the staphylococcal tandem lipoprotein family.

It localises to the cell membrane. This is an uncharacterized protein from Staphylococcus aureus (strain MW2).